A 418-amino-acid chain; its full sequence is Nuclear hormone receptor 114 (418 aa).

The segment at residues 12 to 87 (DHVCLVCQDF…VGMDRNALQQ (76 aa)) is a DNA-binding region (nuclear receptor). 2 NR C4-type zinc fingers span residues 15–35 (CLVCQDFASGYHYGVPSCVGC) and 51–70 (CQFEGNCPVDKTIRCACRYC). A disordered region spans residues 89–130 (RDPIGYTKRTRRPKKELKTTSDCSSDEGASTPPSVSPLQLSP). Residues 170 to 409 (PIRSLHEALC…AFARQLFFGD (240 aa)) form the NR LBD domain. The AF-2 stretch occupies residues 398 to 409 (FSAFARQLFFGD).

It belongs to the nuclear hormone receptor family. As to expression, expressed in germ and intestinal cells and at low levels in the hypodermis.

It localises to the nucleus. Functionally, probable transcription factor which may have a role in detoxifying dietary metabolites arising from bacterial tryptophan metabolism. Required for fertility and involved in proper postembryonic germline development, especially germline stem cell (GSC) proliferation. Required for activation of the methionine/S-adenosylmethionine (Met/SAM) cycle in response to low levels of SAM. The chain is Nuclear hormone receptor 114 from Caenorhabditis elegans.